Here is a 150-residue protein sequence, read N- to C-terminus: Large ribosomal subunit protein bL9 (150 aa).

The protein belongs to the bacterial ribosomal protein bL9 family.

In terms of biological role, binds to the 23S rRNA. The polypeptide is Large ribosomal subunit protein bL9 (Shewanella baltica (strain OS223)).